The sequence spans 285 residues: Phasyl DNA replicon protein arp (285 aa).

Functionally, essential for autonomous replication of the phasyl DNA replicon. In Escherichia coli, this protein is Phasyl DNA replicon protein arp (arp).